Consider the following 181-residue polypeptide: Thioredoxin M-type, chloroplastic (181 aa).

A chloroplast-targeting transit peptide spans 1–67; it reads MAIENCLQLS…RQFRYSSVVC (67 aa). Positions 68 to 180 constitute a Thioredoxin domain; the sequence is KASEAVKEVQ…LTDSIEKYLS (113 aa). Catalysis depends on nucleophile residues C104 and C107. C104 and C107 are joined by a disulfide.

The protein belongs to the thioredoxin family. Plant M-type subfamily. In terms of assembly, forms a complex with heterodimeric ferredoxin-thioredoxin reductase (FTR) and ferredoxin.

It is found in the plastid. The protein resides in the chloroplast. Its function is as follows. Participates in various redox reactions through the reversible oxidation of the active center dithiol to a disulfide. The M form is known to activate NADP-malate dehydrogenase. The protein is Thioredoxin M-type, chloroplastic of Spinacia oleracea (Spinach).